The chain runs to 34 residues: Photosystem II reaction center protein M (34 aa).

Residues 5–25 (ILAFIAIVLFISVPTAFLLII) form a helical membrane-spanning segment.

This sequence belongs to the PsbM family. In terms of assembly, PSII is composed of 1 copy each of membrane proteins PsbA, PsbB, PsbC, PsbD, PsbE, PsbF, PsbH, PsbI, PsbJ, PsbK, PsbL, PsbM, PsbT, PsbX, PsbY, PsbZ, Psb30/Ycf12, at least 3 peripheral proteins of the oxygen-evolving complex and a large number of cofactors. It forms dimeric complexes.

It is found in the plastid. It localises to the chloroplast thylakoid membrane. Functionally, one of the components of the core complex of photosystem II (PSII). PSII is a light-driven water:plastoquinone oxidoreductase that uses light energy to abstract electrons from H(2)O, generating O(2) and a proton gradient subsequently used for ATP formation. It consists of a core antenna complex that captures photons, and an electron transfer chain that converts photonic excitation into a charge separation. This subunit is found at the monomer-monomer interface. The chain is Photosystem II reaction center protein M from Cycas taitungensis (Prince sago).